Here is a 137-residue protein sequence, read N- to C-terminus: MKPLKLFCIGLLLCPLVCLLLETAPPPSALLTLEVKEKTGLKSDAMGVFAIRKNTSDINRQVSGLQRPWMTKFKNHLSDFFKSSIPPAAIFALFVTTAIMRAAIVNKRLEEPHRQWTIDQRSSLEMQNMNLIKLFGG.

The N-terminal stretch at 1–23 is a signal peptide; that stretch reads MKPLKLFCIGLLLCPLVCLLLET. Topologically, residues 24–84 are extracellular; it reads APPPSALLTL…NHLSDFFKSS (61 aa). The chain crosses the membrane as a helical span at residues 85-105; it reads IPPAAIFALFVTTAIMRAAIV. Over 106-137 the chain is Cytoplasmic; that stretch reads NKRLEEPHRQWTIDQRSSLEMQNMNLIKLFGG.

It localises to the cell membrane. The sequence is that of Small integral membrane protein 9 (Smim9) from Mus musculus (Mouse).